We begin with the raw amino-acid sequence, 473 residues long: NAC domain-containing protein 68 (473 aa).

An NAC domain is found at 4-154 (GLIGYRFSPT…KYVVCQVKYK (151 aa)). A DNA-binding region spans residues 108 to 160 (IGIKKTLVYHEGKSPHGVRTPWVMHEYHITCLPHHKRKYVVCQVKYKGEAAEI). Residues 326 to 380 (DHMPRKPVTGTIDYSSDSGSDAGSISTTSYQGTSSPNISVGSSSRHLSSCSSTDS) are disordered. Low complexity-rich tracts occupy residues 340-354 (SSDS…STTS) and 364-379 (SVGS…SSTD). Residues 446–468 (FIYLMKMIIGNIISVLLPVKRLI) traverse the membrane as a helical segment.

It localises to the membrane. The protein localises to the nucleus. In terms of biological role, transcription activator activated by proteolytic cleavage through regulated intramembrane proteolysis (RIP) mediated by calpain or its functional homolog. Regulates cytokinin signaling during cell division. This is NAC domain-containing protein 68 (NAC68) from Arabidopsis thaliana (Mouse-ear cress).